The following is a 500-amino-acid chain: Aspartyl/glutamyl-tRNA(Asn/Gln) amidotransferase subunit B (500 aa).

Belongs to the GatB/GatE family. GatB subfamily. As to quaternary structure, heterotrimer of A, B and C subunits.

The enzyme catalyses L-glutamyl-tRNA(Gln) + L-glutamine + ATP + H2O = L-glutaminyl-tRNA(Gln) + L-glutamate + ADP + phosphate + H(+). The catalysed reaction is L-aspartyl-tRNA(Asn) + L-glutamine + ATP + H2O = L-asparaginyl-tRNA(Asn) + L-glutamate + ADP + phosphate + 2 H(+). Allows the formation of correctly charged Asn-tRNA(Asn) or Gln-tRNA(Gln) through the transamidation of misacylated Asp-tRNA(Asn) or Glu-tRNA(Gln) in organisms which lack either or both of asparaginyl-tRNA or glutaminyl-tRNA synthetases. The reaction takes place in the presence of glutamine and ATP through an activated phospho-Asp-tRNA(Asn) or phospho-Glu-tRNA(Gln). The sequence is that of Aspartyl/glutamyl-tRNA(Asn/Gln) amidotransferase subunit B from Clavibacter sepedonicus (Clavibacter michiganensis subsp. sepedonicus).